The following is a 508-amino-acid chain: GMP synthase [glutamine-hydrolyzing] (508 aa).

One can recognise a Glutamine amidotransferase type-1 domain in the interval 1-189 (MILVLDFGSQ…ALLVCGCEKT (189 aa)). Cysteine 78 acts as the Nucleophile in catalysis. Residues histidine 163 and glutamate 165 contribute to the active site. Residues 190 to 383 (WGMQHFAQRE…LGVSQDFLMH (194 aa)) form the GMPS ATP-PPase domain. ATP is bound at residue 217 to 223 (SGGVDST).

In terms of assembly, homodimer.

It catalyses the reaction XMP + L-glutamine + ATP + H2O = GMP + L-glutamate + AMP + diphosphate + 2 H(+). It participates in purine metabolism; GMP biosynthesis; GMP from XMP (L-Gln route): step 1/1. Its function is as follows. Catalyzes the synthesis of GMP from XMP. The protein is GMP synthase [glutamine-hydrolyzing] of Helicobacter pylori (strain G27).